Reading from the N-terminus, the 291-residue chain is MEMO1 family protein PYRAB05390 (291 aa).

The protein belongs to the MEMO1 family.

The polypeptide is MEMO1 family protein PYRAB05390 (Pyrococcus abyssi (strain GE5 / Orsay)).